The following is a 790-amino-acid chain: RNA-directed RNA polymerase 2a (790 aa).

One can recognise a RdRp catalytic domain in the interval 524-639 (FHFKEIDFSK…GTVEELPRDQ (116 aa)). Positions 771-790 (IKPRRVKKSHSDARSRARRA) are disordered. A compositionally biased stretch (basic and acidic residues) spans 779–790 (SHSDARSRARRA).

The protein belongs to the bromoviridae 2a family. Interacts with replication protein 1a.

It carries out the reaction RNA(n) + a ribonucleoside 5'-triphosphate = RNA(n+1) + diphosphate. RNA-dependent RNA polymerase which replicates the viral genome composed of 3 RNA segments, RNA1, RNA2 and RNA3. This chain is RNA-directed RNA polymerase 2a, found in Alfalfa mosaic virus (AMV).